We begin with the raw amino-acid sequence, 121 residues long: Large ribosomal subunit protein bL19 (121 aa).

Belongs to the bacterial ribosomal protein bL19 family.

This protein is located at the 30S-50S ribosomal subunit interface and may play a role in the structure and function of the aminoacyl-tRNA binding site. The polypeptide is Large ribosomal subunit protein bL19 (Chloroherpeton thalassium (strain ATCC 35110 / GB-78)).